Reading from the N-terminus, the 94-residue chain is Beta-diguetoxin-Dc1a (94 aa).

Residues M1–A17 form the signal peptide. Positions L18 to R38 are excised as a propeptide. Cystine bridges form between C50–C63, C57–C77, C62–C91, and C79–C89.

It belongs to the neurotoxin 26 (DTX) family. Expressed by the venom gland.

It is found in the secreted. Insecticidal toxin. This toxin promotes opening of insect Nav channels. The toxin binds to the S1-S2 and S3-S4 loops in the domain II voltage-sensor of insect Nav channels (i.e., receptor site 4). The American cockroach P.americana is largely resistant to the effects of this toxin due to an unusual sequence within the domain II S1-S2 loop. In vivo, paralyzes lepidopteran and dipteran larvae. Paralyzed insects ultimately die from secondary effects of starvation and dehydration. This is Beta-diguetoxin-Dc1a from Diguetia canities (Desert bush spider).